The primary structure comprises 542 residues: Keratin, type II cytoskeletal 75 (542 aa).

Polar residues predominate over residues 1–26 (MSRQSTVTFHSGSRRGFSTASATTPT). A disordered region spans residues 1 to 44 (MSRQSTVTFHSGSRRGFSTASATTPTAGRSRFSSVSVARSSGNS). A head region spans residues 1–139 (MSRQSTVTFH…DPTIQRVRKE (139 aa)). The segment covering 27–42 (AGRSRFSSVSVARSSG) has biased composition (low complexity). The tract at residues 140-175 (EREQIKTLNNKFASFIDKVRFLEQQNKVLETKWNLL) is coil 1A. The 314-residue stretch at 140-453 (EREQIKTLNN…KLLEGEECRL (314 aa)) folds into the IF rod domain. Positions 176-194 (QEQGSRTVRQNLEPFFDAY) are linker 1. Positions 195–287 (VNDLRRQLDS…VYEAELSQMQ (93 aa)) are coil 1B. The linker 12 stretch occupies residues 288–310 (NQVSDTSVVLSMDNNRSLDLDSI). Residues 311 to 449 (IAEVKAQYED…ATYRKLLEGE (139 aa)) are coil 2. Residues 450–542 (ECRLSGEGVS…TSSSRKSYKH (93 aa)) are tail. Positions 514 to 542 (TSSSRGPVGSGSSIKFVSSTSSSRKSYKH) are disordered.

This sequence belongs to the intermediate filament family. Heterodimer of a type I and a type II keratin. May associate with KRT17.

Functionally, plays a central role in hair and nail formation. Essential component of keratin intermediate filaments in the companion layer of the hair follicle. This Rattus norvegicus (Rat) protein is Keratin, type II cytoskeletal 75 (Krt75).